The chain runs to 415 residues: MFS-type transporter FVEG_12626 (415 aa).

Basic and acidic residues predominate over residues Met1–Pro18. Positions Met1–Thr22 are disordered. A run of 6 helical transmembrane segments spans residues Gly27–Phe47, Thr63–Gly83, Tyr93–Ser113, Tyr118–Phe138, Leu151–Val171, and Ile178–Thr198. Residue Asn199 is glycosylated (N-linked (GlcNAc...) asparagine). The next 6 helical transmembrane spans lie at Phe227–Phe247, Tyr264–Ala284, Phe290–Pro310, Ile318–Leu338, Thr354–Ile374, and Val386–Ile406.

Belongs to the major facilitator superfamily. Monocarboxylate porter (TC 2.A.1.13) family.

The protein localises to the membrane. In terms of biological role, MFS-type transporter; part of the Fusarium detoxification of benzoxazolinone cluster 2 (FDB2) involved in the degradation of benzoxazolinones produced by the host plant. Maize, wheat, and rye produce the 2 benzoxazinone phytoanticipins 2,4-dihy-droxy-7-methoxy-1,4-benzoxazin-3-one (DIMBOA) and 2,4-dihydroxy-1,4-benzoxazin-3-one (DIBOA) that, due to their inherent instability once released, spontaneously degrade to the more stable corresponding benzoxazolinones, 6-methoxy-2-benzoxazolinone (MBOA) and 2-benzoxazolinone (BOA), respectively. In Gibberella moniliformis (strain M3125 / FGSC 7600) (Maize ear and stalk rot fungus), this protein is MFS-type transporter FVEG_12626.